The following is a 235-amino-acid chain: Elongation factor Tu, chloroplastic (235 aa).

Residues 1 to 125 (KNMITGAAQM…KVDSYIPTPQ (125 aa)) form the tr-type G domain. 47–50 (NKED) contacts GTP.

It belongs to the TRAFAC class translation factor GTPase superfamily. Classic translation factor GTPase family. EF-Tu/EF-1A subfamily.

Its subcellular location is the plastid. The protein localises to the chloroplast. It catalyses the reaction GTP + H2O = GDP + phosphate + H(+). In terms of biological role, GTP hydrolase that promotes the GTP-dependent binding of aminoacyl-tRNA to the A-site of ribosomes during protein biosynthesis. The protein is Elongation factor Tu, chloroplastic (tufA) of Gonium pectorale (Green alga).